Reading from the N-terminus, the 295-residue chain is Acetaldehyde dehydrogenase (295 aa).

11 to 14 (SGNI) contributes to the NAD(+) binding site. Cys127 acts as the Acyl-thioester intermediate in catalysis. Residues 158–166 (SAGPGTRAN) and Asn270 contribute to the NAD(+) site.

Belongs to the acetaldehyde dehydrogenase family.

The enzyme catalyses acetaldehyde + NAD(+) + CoA = acetyl-CoA + NADH + H(+). The polypeptide is Acetaldehyde dehydrogenase (nbaJ) (Geobacillus thermodenitrificans (strain NG80-2)).